The primary structure comprises 122 residues: Small ribosomal subunit protein uS13 (122 aa).

A compositionally biased stretch (basic residues) spans Val-98–Thr-116. Residues Val-98–Lys-122 form a disordered region.

It belongs to the universal ribosomal protein uS13 family. In terms of assembly, part of the 30S ribosomal subunit. Forms a loose heterodimer with protein S19. Forms two bridges to the 50S subunit in the 70S ribosome.

Located at the top of the head of the 30S subunit, it contacts several helices of the 16S rRNA. In the 70S ribosome it contacts the 23S rRNA (bridge B1a) and protein L5 of the 50S subunit (bridge B1b), connecting the 2 subunits; these bridges are implicated in subunit movement. Contacts the tRNAs in the A and P-sites. This Campylobacter fetus subsp. fetus (strain 82-40) protein is Small ribosomal subunit protein uS13.